The primary structure comprises 397 residues: MSTSESPSSRFRELSKYINSLTNLLGVDFLSPKLKFNYRTWTTIFAIANYTGFTVFTILNNGGDWRVGLKASLMTGGLFHGLGKFLTCLLKHQDMRRLVLYSQSIYDEYETRGDSYHRTLNSNIDRLLGIMKIIRNGYVFAFCLMELLPLAMLMYDGTRVTAMQYLIPGLPLENNYCYVVTYMIQTVTMLVQGVGFYSGDLFVFLGLTQILTFADMLQVKVKELNDALEQKAEYRALVRVGASIDGAENRQRLLLDVIRWHQLFTDYCRAINALYYELIATQVLSMALAMMLSFCINLSSFHMPSAIFFVVSAYSMSIYCILGTILEFAYDQVYESICNVTWYELSGEQRKLFGFLLRESQYPHNIQILGVMSLSVRTALQIVKLIYSVSMMMMNRA.

The Cytoplasmic portion of the chain corresponds to 1 to 39; it reads MSTSESPSSRFRELSKYINSLTNLLGVDFLSPKLKFNYR. A helical membrane pass occupies residues 40–60; it reads TWTTIFAIANYTGFTVFTILN. Over 61–70 the chain is Extracellular; sequence NGGDWRVGLK. The chain crosses the membrane as a helical span at residues 71 to 90; sequence ASLMTGGLFHGLGKFLTCLL. Residues 91–136 are Cytoplasmic-facing; it reads KHQDMRRLVLYSQSIYDEYETRGDSYHRTLNSNIDRLLGIMKIIRN. Residues 137–157 traverse the membrane as a helical segment; it reads GYVFAFCLMELLPLAMLMYDG. The Extracellular portion of the chain corresponds to 158-186; that stretch reads TRVTAMQYLIPGLPLENNYCYVVTYMIQT. The helical transmembrane segment at 187-207 threads the bilayer; it reads VTMLVQGVGFYSGDLFVFLGL. Residues 208–282 are Cytoplasmic-facing; it reads TQILTFADML…ALYYELIATQ (75 aa). Residues 283–299 form a helical membrane-spanning segment; the sequence is VLSMALAMMLSFCINLS. The Extracellular segment spans residues 300–305; the sequence is SFHMPS. The chain crosses the membrane as a helical span at residues 306–326; sequence AIFFVVSAYSMSIYCILGTIL. Residues 327-365 are Cytoplasmic-facing; the sequence is EFAYDQVYESICNVTWYELSGEQRKLFGFLLRESQYPHN. A helical membrane pass occupies residues 366–386; it reads IQILGVMSLSVRTALQIVKLI. Topologically, residues 387 to 397 are extracellular; it reads YSVSMMMMNRA.

The protein belongs to the insect chemoreceptor superfamily. Heteromeric odorant receptor channel (TC 1.A.69) family. Or67d subfamily. As to quaternary structure, interacts with Orco. Complexes exist early in the endomembrane system in olfactory sensory neurons (OSNs), coupling these complexes to the conserved ciliary trafficking pathway. In terms of tissue distribution, expressed in olfactory sensory neurons in the antenna.

It is found in the cell membrane. Its function is as follows. Odorant receptor which mediates acceptance or avoidance behavior, depending on its substrates. The odorant receptor repertoire encodes a large collection of odor stimuli that vary widely in identity, intensity, and duration. May form a complex with Orco to form odorant-sensing units, providing sensitive and prolonged odorant signaling and calcium permeability. This Drosophila melanogaster (Fruit fly) protein is Putative odorant receptor 83c (Or83c).